Consider the following 375-residue polypeptide: Thioredoxin reductase 1, mitochondrial (375 aa).

The transit peptide at 1–37 (MNCVSRLKCLISKARSFARLGGESTLSQPPSLASAAF) directs the protein to the mitochondrion. FAD-binding positions include 58 to 61 (SGPA), 79 to 80 (FE), 87 to 92 (IAPGGQ), asparagine 101, valine 134, cysteine 192, aspartate 337, and 344 to 346 (RQA). An intrachain disulfide couples cysteine 189 to cysteine 192.

The protein belongs to the class-II pyridine nucleotide-disulfide oxidoreductase family. As to quaternary structure, homodimer. It depends on FAD as a cofactor. Ubiquitous.

The protein resides in the cytoplasm. Its subcellular location is the mitochondrion. It catalyses the reaction [thioredoxin]-dithiol + NADP(+) = [thioredoxin]-disulfide + NADPH + H(+). Its function is as follows. NADPH-dependent thioredoxin-disulfide reductase that reduces thioredoxins O1, O2 and F3. This chain is Thioredoxin reductase 1, mitochondrial (NTR1), found in Arabidopsis thaliana (Mouse-ear cress).